The primary structure comprises 273 residues: Shikimate dehydrogenase (NADP(+)) (273 aa).

Shikimate contacts are provided by residues 15-17 (SLS) and T62. Catalysis depends on K66, which acts as the Proton acceptor. Position 78 (E78) interacts with NADP(+). Shikimate contacts are provided by N87 and D102. Residues 126 to 130 (GAGGA), 149 to 154 (NRTPER), I215, and G238 contribute to the NADP(+) site.

It belongs to the shikimate dehydrogenase family. As to quaternary structure, homodimer.

It catalyses the reaction shikimate + NADP(+) = 3-dehydroshikimate + NADPH + H(+). Its pathway is metabolic intermediate biosynthesis; chorismate biosynthesis; chorismate from D-erythrose 4-phosphate and phosphoenolpyruvate: step 4/7. In terms of biological role, involved in the biosynthesis of the chorismate, which leads to the biosynthesis of aromatic amino acids. Catalyzes the reversible NADPH linked reduction of 3-dehydroshikimate (DHSA) to yield shikimate (SA). The protein is Shikimate dehydrogenase (NADP(+)) of Desulfitobacterium hafniense (strain Y51).